A 1367-amino-acid chain; its full sequence is MAP3K epsilon protein kinase 2 (1367 aa).

One can recognise a Protein kinase domain in the interval tyrosine 20 to isoleucine 274. 2 HEAT repeats span residues glutamate 25–asparagine 62 and leucine 86–isoleucine 125. Residues isoleucine 26–valine 34 and lysine 49 contribute to the ATP site. The active-site Proton acceptor is the aspartate 144. One copy of the HEAT 3 repeat lies at proline 218–lysine 256. Disordered regions lie at residues leucine 285–asparagine 422 and serine 437–glycine 513. A compositionally biased stretch (basic and acidic residues) spans tyrosine 293–glutamate 306. The span at leucine 351–asparagine 363 shows a compositional bias: acidic residues. The span at arginine 378–valine 396 shows a compositional bias: polar residues. Composition is skewed to basic and acidic residues over residues leucine 397–isoleucine 408 and serine 475–threonine 491. A compositionally biased stretch (polar residues) spans asparagine 492 to aspartate 507. HEAT repeat units lie at residues serine 538–leucine 576, glutamine 577–glutamine 614, isoleucine 633–glutamate 658, asparagine 659–leucine 700, and methionine 704–leucine 742. A disordered region spans residues proline 792–leucine 860. 2 stretches are compositionally biased toward polar residues: residues leucine 799 to serine 814 and alanine 835 to valine 845. The segment covering histidine 846–arginine 859 has biased composition (basic and acidic residues). HEAT repeat units lie at residues alanine 850–lysine 888, aspartate 906–arginine 943, aspartate 1045–serine 1066, tyrosine 1067–cysteine 1105, alanine 1112–arginine 1150, glutamine 1154–asparagine 1191, leucine 1196–glutamine 1236, arginine 1257–leucine 1280, alanine 1281–lysine 1317, and glutamine 1347–leucine 1367.

It belongs to the protein kinase superfamily. Ser/Thr protein kinase family. Post-translationally, autophosphorylated. Expressed in both the sporophytic and the gametophytic tissues, especially in dividing cells. Mostly present in flower buds and mature flowers. Also accumulates in embryos and in roots.

It localises to the cytoplasm. The protein resides in the cytoskeleton. The protein localises to the microtubule organizing center. Its subcellular location is the nucleus. It is found in the nucleolus. It localises to the cell membrane. It carries out the reaction L-seryl-[protein] + ATP = O-phospho-L-seryl-[protein] + ADP + H(+). The enzyme catalyses L-threonyl-[protein] + ATP = O-phospho-L-threonyl-[protein] + ADP + H(+). Serine/threonine-protein kinase involved in the spatial and temporal control system organizing cortical activities in mitotic and postmitotic cells. Required for the normal functioning of the plasma membrane in developing pollen. Involved in the regulation of cell expansion and embryo development. In Arabidopsis thaliana (Mouse-ear cress), this protein is MAP3K epsilon protein kinase 2.